The primary structure comprises 268 residues: 3-methyl-2-oxobutanoate hydroxymethyltransferase (268 aa).

The Mg(2+) site is built by D46 and D85. 3-methyl-2-oxobutanoate is bound by residues 46-47 (DS), D85, and K114. E116 provides a ligand contact to Mg(2+). Catalysis depends on E183, which acts as the Proton acceptor.

Belongs to the PanB family. As to quaternary structure, homodecamer; pentamer of dimers. Mg(2+) is required as a cofactor.

The protein localises to the cytoplasm. The catalysed reaction is 3-methyl-2-oxobutanoate + (6R)-5,10-methylene-5,6,7,8-tetrahydrofolate + H2O = 2-dehydropantoate + (6S)-5,6,7,8-tetrahydrofolate. Its pathway is cofactor biosynthesis; coenzyme A biosynthesis. Catalyzes the reversible reaction in which hydroxymethyl group from 5,10-methylenetetrahydrofolate is transferred onto alpha-ketoisovalerate to form ketopantoate. This chain is 3-methyl-2-oxobutanoate hydroxymethyltransferase, found in Sulfolobus acidocaldarius (strain ATCC 33909 / DSM 639 / JCM 8929 / NBRC 15157 / NCIMB 11770).